Here is a 256-residue protein sequence, read N- to C-terminus: Na(+)-translocating NADH-quinone reductase subunit E (256 aa).

6 helical membrane passes run 1–21 (MWLG…AAFI), 50–70 (MSVA…HAFI), 83–103 (LASV…IAAF), 123–143 (GIFL…LFGI), 149–169 (FIPM…AIVI), and 189–209 (MGIS…LTGI). Positions 229–249 (ENTTNPLKESSSKHQPSISKA) are enriched in polar residues. The interval 229-256 (ENTTNPLKESSSKHQPSISKARTQRRSL) is disordered.

The protein belongs to the NqrDE/RnfAE family. Composed of six subunits; NqrA, NqrB, NqrC, NqrD, NqrE and NqrF.

The protein localises to the cell inner membrane. It catalyses the reaction a ubiquinone + n Na(+)(in) + NADH + H(+) = a ubiquinol + n Na(+)(out) + NAD(+). Functionally, NQR complex catalyzes the reduction of ubiquinone-1 to ubiquinol by two successive reactions, coupled with the transport of Na(+) ions from the cytoplasm to the periplasm. NqrA to NqrE are probably involved in the second step, the conversion of ubisemiquinone to ubiquinol. The polypeptide is Na(+)-translocating NADH-quinone reductase subunit E (Chlamydia pneumoniae (Chlamydophila pneumoniae)).